The sequence spans 610 residues: Protein Spindly-B (610 aa).

Residues 1–392 (MEESETVLKL…IDKVKDELSL (392 aa)) adopt a coiled-coil conformation. Residues 474–610 (TEAHGVSDAT…KPATAQCPQQ (137 aa)) form a disordered region. Basic and acidic residues-rich tracts occupy residues 493–511 (SDDKKLPKEDLSLSTKDQD) and 535–548 (RIMEDEKDTPDLNK). The segment covering 549–561 (RNPNNCTITSIHP) has biased composition (polar residues). A compositionally biased stretch (basic and acidic residues) spans 570–583 (SELKKVDEEQEKRK).

It belongs to the Spindly family.

It localises to the chromosome. Its subcellular location is the centromere. The protein resides in the kinetochore. In terms of biological role, required for the localization of dynein and dynactin to the mitotic kintochore. Dynein is believed to control the initial lateral interaction between the kinetochore and spindle microtubules and to facilitate the subsequent formation of end-on kinetochore-microtubule attachments mediated by the NDC80 complex. This Xenopus laevis (African clawed frog) protein is Protein Spindly-B (spdl1-b).